Here is a 457-residue protein sequence, read N- to C-terminus: MRESLKLSLFYFNKKERNKMNYTTQMDAAKRGIVTKEMETIAKKEGIDVKKIIECVAKGSVAIPANKNHKSLSAEGVGQGLRTKINVNLGISKDCCNVDRELEKVKKAIDMKAEAIMDLSCFGKTQEFRKRLIEMSPAMIGTVPMYDAIGFYDKELKDITAEELLDVIETHAKDGVDFMTIHAGLNREAVEIFKRNERLTNIVSRGGSLLYAWMELNNKENPFYEHFDKVLDICEKYDVTISLGDACRPGSIHDSTDASQIKELMTLGELTKRAWERNVQIIIEGPGHMSLDEIETNMKLEKKLCYNAPFYVLGPIVTDIAPGYDHITSAIGGAIAATYGADFLCYVTPAEHLRLPDLDDMKEGIIATKIAAHAADIAKGIKGAREWDNKMSVARKELDWEKMFDLAIDNEKARKYRKNSTPEVNDSCTMCGKMCAVRNMNKVMQGKDINILRNEDK.

Substrate contacts are provided by residues asparagine 88, methionine 117, tyrosine 146, histidine 182, 204 to 206 (SRG), 245 to 248 (DACR), and glutamate 284. A Zn(2+)-binding site is contributed by histidine 288. Tyrosine 311 serves as a coordination point for substrate. Histidine 352 is a Zn(2+) binding site. 3 residues coordinate [4Fe-4S] cluster: cysteine 428, cysteine 431, and cysteine 435.

It belongs to the ThiC family. Requires [4Fe-4S] cluster as cofactor.

It catalyses the reaction 5-amino-1-(5-phospho-beta-D-ribosyl)imidazole + S-adenosyl-L-methionine = 4-amino-2-methyl-5-(phosphooxymethyl)pyrimidine + CO + 5'-deoxyadenosine + formate + L-methionine + 3 H(+). Its pathway is cofactor biosynthesis; thiamine diphosphate biosynthesis. Functionally, catalyzes the synthesis of the hydroxymethylpyrimidine phosphate (HMP-P) moiety of thiamine from aminoimidazole ribotide (AIR) in a radical S-adenosyl-L-methionine (SAM)-dependent reaction. The chain is Phosphomethylpyrimidine synthase from Clostridium tetani (strain Massachusetts / E88).